The primary structure comprises 134 residues: Acyl carrier protein, chloroplastic (134 aa).

Residues 1–51 (MATTFSASVSMQATSLATTTRISFQKPVLVSNHGRTNLSFNLSRTRLSISC) constitute a chloroplast transit peptide. The Carrier domain occupies 55 to 130 (QETVEKVSEI…QAAELIEELM (76 aa)). S90 bears the O-(pantetheine 4'-phosphoryl)serine mark.

The protein belongs to the acyl carrier protein (ACP) family. Post-translationally, 4'-phosphopantetheine is transferred from CoA to a specific serine of apo-ACP by acpS. This modification is essential for activity because fatty acids are bound in thioester linkage to the sulfhydryl of the prosthetic group. As to expression, seed.

It localises to the plastid. The protein localises to the chloroplast. It functions in the pathway lipid metabolism; fatty acid biosynthesis. Carrier of the growing fatty acid chain in fatty acid biosynthesis. This chain is Acyl carrier protein, chloroplastic (ACL1.C1), found in Brassica napus (Rape).